Reading from the N-terminus, the 160-residue chain is Ribosomal RNA large subunit methyltransferase H (160 aa).

Residue Gly-108 coordinates S-adenosyl-L-methionine.

Belongs to the RNA methyltransferase RlmH family. Homodimer.

Its subcellular location is the cytoplasm. It catalyses the reaction pseudouridine(1915) in 23S rRNA + S-adenosyl-L-methionine = N(3)-methylpseudouridine(1915) in 23S rRNA + S-adenosyl-L-homocysteine + H(+). In terms of biological role, specifically methylates the pseudouridine at position 1915 (m3Psi1915) in 23S rRNA. The protein is Ribosomal RNA large subunit methyltransferase H of Rhodopseudomonas palustris (strain BisA53).